A 291-amino-acid polypeptide reads, in one-letter code: Ubiquinone biosynthesis protein COQ4, mitochondrial (291 aa).

A mitochondrion-targeting transit peptide spans 1-37; sequence MLGRRSVSLLRGLTELPVSSRAHTALRALSVPQTRRN. The Zn(2+) site is built by His169, Asp170, His173, and Glu185. The span at 271 to 283 shows a compositional bias: basic and acidic residues; that stretch reads PLNEAKEAAERRS. The tract at residues 271–291 is disordered; that stretch reads PLNEAKEAAERRSKTTQNQIY.

It belongs to the COQ4 family. In terms of assembly, component of a multi-subunit COQ enzyme complex, composed of at least COQ3, COQ4, COQ5, COQ6, COQ7 and COQ9. The cofactor is Zn(2+).

It localises to the mitochondrion inner membrane. The enzyme catalyses a 4-hydroxy-3-methoxy-5-(all-trans-polyprenyl)benzoate + H(+) = a 2-methoxy-6-(all-trans-polyprenyl)phenol + CO2. Its pathway is cofactor biosynthesis; ubiquinone biosynthesis. Functionally, lyase that catalyzes the C1-decarboxylation of 4-hydroxy-3-methoxy-5-(all-trans-polyprenyl)benzoic acid into 2-methoxy-6-(all-trans-polyprenyl)phenol during ubiquinone biosynthesis. The chain is Ubiquinone biosynthesis protein COQ4, mitochondrial from Coprinopsis cinerea (strain Okayama-7 / 130 / ATCC MYA-4618 / FGSC 9003) (Inky cap fungus).